The primary structure comprises 634 residues: RING finger protein 207 (634 aa).

The RING-type zinc-finger motif lies at 25-63; sequence CHLCQEQYEHPCLLDCYHTFCASCLRGRVADSRLTCPVC. The B box-type; atypical zinc finger occupies 93-145; that stretch reads EETVQCANCDLECKKQDVDAMYYCNTCCQPLCRDCRETTHKAKMFSRHEIVSL. Zn(2+) contacts are provided by Cys98, Cys101, Cys127, and His132. The disordered stretch occupies residues 575–634; that stretch reads YEDSTSTADTQPSNELSCNTEDNWTLNSLSEETNPKNKDYYRTNKQKNTTDSTNRKEIPM. Polar residues predominate over residues 577–606; that stretch reads DSTSTADTQPSNELSCNTEDNWTLNSLSEE. Over residues 607–616 the composition is skewed to basic and acidic residues; it reads TNPKNKDYYR.

The protein localises to the cytoplasm. Functionally, plays a role in cardiac repolarization possibly by stabilizing membrane expression of the potassium channel kcnh6a/zerg, or by assisting its synthesis, folding or export from the endoplasmic reticulum, in a heat shock protein-dependent manner. This is RING finger protein 207 (rnf207b) from Danio rerio (Zebrafish).